We begin with the raw amino-acid sequence, 115 residues long: Skin calcitonin gene-related peptide (115 aa).

The first 25 residues, 1-25, serve as a signal peptide directing secretion; sequence MVLLKISSLLAVLGLLVCQMYSSQA. A propeptide spans 26-69 (removed in mature form by a carboxypeptidase); that stretch reads APARRALEPLPDRVTEAHRLLRALIRELTAEDMEASSSGAAHKR. An intrachain disulfide couples cysteine 71 to cysteine 76. A Phenylalanine amide modification is found at phenylalanine 106. Residues 107–115 constitute a propeptide, removed in mature form by an endoprotease; sequence GRRRRSLHV.

Skin, intestine and brain.

The protein localises to the secreted. Its function is as follows. CGRP induces vasodilation. It dilates a variety of vessels including the coronary, cerebral and systemic vasculature. Its abundance in the CNS also points toward a neurotransmitter or neuromodulator role. The sequence is that of Skin calcitonin gene-related peptide from Phyllomedusa bicolor (Two-colored leaf frog).